Here is a 1402-residue protein sequence, read N- to C-terminus: DNA-directed RNA polymerase subunit beta' (1402 aa).

Residues Cys71, Cys73, Cys86, and Cys89 each contribute to the Zn(2+) site. 3 residues coordinate Mg(2+): Asp462, Asp464, and Asp466. Cys811, Cys885, Cys892, and Cys895 together coordinate Zn(2+).

This sequence belongs to the RNA polymerase beta' chain family. As to quaternary structure, the RNAP catalytic core consists of 2 alpha, 1 beta, 1 beta' and 1 omega subunit. When a sigma factor is associated with the core the holoenzyme is formed, which can initiate transcription. Requires Mg(2+) as cofactor. The cofactor is Zn(2+).

The catalysed reaction is RNA(n) + a ribonucleoside 5'-triphosphate = RNA(n+1) + diphosphate. Functionally, DNA-dependent RNA polymerase catalyzes the transcription of DNA into RNA using the four ribonucleoside triphosphates as substrates. In Bartonella henselae (strain ATCC 49882 / DSM 28221 / CCUG 30454 / Houston 1) (Rochalimaea henselae), this protein is DNA-directed RNA polymerase subunit beta'.